We begin with the raw amino-acid sequence, 256 residues long: uncharacterized protein (256 aa).

Disordered stretches follow at residues 1 to 171 and 185 to 256; these read MARG…QLKH and NGQR…LYND. The stretch at 14-39 forms a coiled coil; the sequence is KRRSKVQEEEEHVEGSEEEVEEPEQK. Composition is skewed to acidic residues over residues 21–35 and 64–92; these read EEEE…EVEE and SDDD…DNDE. Basic and acidic residues predominate over residues 108 to 129; sequence NRGDHESHDDNSDNEEQGDRGN. The span at 192–205 shows a compositional bias: gly residues; it reads KRGGPPRGSFGQRG. Positions 219–234 are enriched in basic and acidic residues; it reads RQGDTRDTRDTRDTRL.

This is an uncharacterized protein from Acanthamoeba polyphaga (Amoeba).